The sequence spans 291 residues: Insulin-like growth factor-binding protein 3 (291 aa).

The signal sequence occupies residues 1–27 (MQRARPTLWAAALTLLVLLRGPPVARA). Residues 28–134 (GASSAGLGPV…AYLLPAPPAP (107 aa)) form an IGF-binding region. Residues 36 to 117 (PVVRCEPCDA…LDGRGLCVNA (82 aa)) enclose the IGFBP N-terminal domain. 6 disulfides stabilise this stretch: cysteine 40–cysteine 67, cysteine 43–cysteine 69, cysteine 51–cysteine 70, cysteine 58–cysteine 73, cysteine 81–cysteine 94, and cysteine 88–cysteine 114. Asparagine 116 and asparagine 136 each carry an N-linked (GlcNAc...) (complex) asparagine glycan. 2 disordered regions span residues 130–162 (APPA…RVSD) and 189–211 (DYES…TEYG). Low complexity predominate over residues 146–156 (AGSVESPSVSS). Serine 148 is subject to Phosphoserine; by FAM20C. Residues 191–202 (ESQSTDTQNFSS) show a composition bias toward polar residues. Serine 194 is modified (phosphoserine; by CK2). Asparagine 199 carries N-linked (GlcNAc...) (complex) asparagine glycosylation. Residue serine 201 is modified to Phosphoserine; by FAM20C. Serine 202 carries the post-translational modification Phosphoserine; by CK2. In terms of domain architecture, Thyroglobulin type-1 spans 210-285 (YGPCRREMED…TTKGKEDVHC (76 aa)). 3 cysteine pairs are disulfide-bonded: cysteine 213/cysteine 240, cysteine 251/cysteine 262, and cysteine 264/cysteine 285.

As to quaternary structure, interacts with XLKD1. Binds IGF2 more than IGF1. Forms a ternary complex of about 140 to 150 kDa with IGF1 or IGF2 and a 85 kDa glycoprotein (ALS). Interacts with humanin; humanin competes with importin KPNB1 for binding to IGFBP3, blocking IGFBP3 nuclear import and IGFBP3-mediated apoptosis. Interacts with TMEM219. Interacts with RXRA; this interaction modulates the transcriptional activity of RXRA. Interacts with LRP1; this interaction mediates cell growth inhibition independent of IGF1. Post-translationally, phosphorylated by FAM20C in the extracellular medium. Phosphorylated by CK2; resulting in decreased nuclear localization. In terms of tissue distribution, expressed by most tissues. Present in plasma.

It is found in the secreted. Its subcellular location is the nucleus. Its function is as follows. Multifunctional protein that plays a critical role in regulating the availability of IGFs such as IGF1 and IGF2 to their receptors and thereby regulates IGF-mediated cellular processes including proliferation, differentiation, and apoptosis in a cell-type specific manner. Also exhibits IGF-independent antiproliferative and apoptotic effects mediated by its receptor TMEM219/IGFBP-3R. Inhibits the positive effect of humanin on insulin sensitivity. Promotes testicular germ cell apoptosis. Acts via LRP-1/alpha2M receptor, also known as TGF-beta type V receptor, to mediate cell growth inhibition independent of IGF1. Mechanistically, induces serine-specific dephosphorylation of IRS1 or IRS2 upon ligation to its receptor, leading to the inhibitory cascade. In the nucleus, interacts with transcription factors such as retinoid X receptor-alpha/RXRA to regulate transcriptional signaling and apoptosis. The polypeptide is Insulin-like growth factor-binding protein 3 (IGFBP3) (Homo sapiens (Human)).